We begin with the raw amino-acid sequence, 236 residues long: CDP-diacylglycerol--glycerol-3-phosphate 3-phosphatidyltransferase (236 aa).

The next 5 membrane-spanning stretches (helical) occupy residues 39–59 (IFIALPTIIFIALDNQLGVLA), 66–86 (ISISLQISLLIGGFLFLTAVI), 120–140 (VLIALAINGYFHFSLLIVFIV), 163–183 (WLGKWKTIMQMVGIVFSCFVW), and 196–216 (GLFFWLLTQLPYYLAAVFSIW).

The protein belongs to the CDP-alcohol phosphatidyltransferase class-I family.

It is found in the cell membrane. It catalyses the reaction a CDP-1,2-diacyl-sn-glycerol + sn-glycerol 3-phosphate = a 1,2-diacyl-sn-glycero-3-phospho-(1'-sn-glycero-3'-phosphate) + CMP + H(+). It participates in phospholipid metabolism; phosphatidylglycerol biosynthesis; phosphatidylglycerol from CDP-diacylglycerol: step 1/2. Its function is as follows. This protein catalyzes the committed step to the synthesis of the acidic phospholipids. This is CDP-diacylglycerol--glycerol-3-phosphate 3-phosphatidyltransferase (pgsA) from Mycoplasma genitalium (strain ATCC 33530 / DSM 19775 / NCTC 10195 / G37) (Mycoplasmoides genitalium).